Here is a 376-residue protein sequence, read N- to C-terminus: Putative glutamate--cysteine ligase 2 (376 aa).

This sequence belongs to the glutamate--cysteine ligase type 2 family. YbdK subfamily.

The catalysed reaction is L-cysteine + L-glutamate + ATP = gamma-L-glutamyl-L-cysteine + ADP + phosphate + H(+). In terms of biological role, ATP-dependent carboxylate-amine ligase which exhibits weak glutamate--cysteine ligase activity. The sequence is that of Putative glutamate--cysteine ligase 2 from Mycolicibacterium paratuberculosis (strain ATCC BAA-968 / K-10) (Mycobacterium paratuberculosis).